The chain runs to 302 residues: Endochitinase 4 (302 aa).

A signal peptide spans 1-18; that stretch reads EFTALSLLFSLLLLTASA. The Chitin-binding type-1 domain occupies 19-60; it reads EQCGKQAGGARCAAGLCCSNFGWCGNTNDYCGPGKCQSQCPS. 4 disulfides stabilise this stretch: C21-C36, C30-C42, C35-C49, and C54-C58. The segment at 59–79 is disordered; sequence PSGPSPKPPTPGPGPSGGDIG. Residues 61–72 show a composition bias toward pro residues; the sequence is GPSPKPPTPGPG. The active-site Proton donor is E144. Cysteines 162 and 182 form a disulfide.

This sequence belongs to the glycosyl hydrolase 19 family. Chitinase class I subfamily.

It is found in the vacuole. It catalyses the reaction Random endo-hydrolysis of N-acetyl-beta-D-glucosaminide (1-&gt;4)-beta-linkages in chitin and chitodextrins.. Defense against chitin-containing fungal pathogens. This chain is Endochitinase 4 (CHTB4), found in Solanum tuberosum (Potato).